A 312-amino-acid chain; its full sequence is Olfactory receptor 10D3 (312 aa).

Topologically, residues 1-26 (MEVKNCCMVTEFILLGIPHTEGLEMT) are extracellular. A helical transmembrane segment spans residues 27-47 (LFVLFLPFYACTLLGNVSILV). The Cytoplasmic portion of the chain corresponds to 48-57 (AVMSSARLHT). The chain crosses the membrane as a helical span at residues 58-78 (PMYFFLGNLSVFDMGFSSVTC). Residues 79–97 (PKMLLYLMGLSRLISYKDC) lie on the Extracellular side of the membrane. Residues Cys97 and Cys179 are joined by a disulfide bond. Residues 98 to 118 (VCQLFFFHFLGSIECFLFTVM) form a helical membrane-spanning segment. Over 119-139 (AYDRFTAICYPLRYTVIMNPR) the chain is Cytoplasmic. Residues 140–160 (ICVALAVGTWLLGCIHSSILT) traverse the membrane as a helical segment. Topologically, residues 161-197 (SLTFTLPYCGPNEVDHFFCDIPALLPLACADTSLAQR) are extracellular. The chain crosses the membrane as a helical span at residues 198–218 (VSFTNVGLISLVCFLLILLSY). The Cytoplasmic portion of the chain corresponds to 219–239 (TRITISILSIRTTEGRRRAFS). The helical transmembrane segment at 240–260 (TCSAHLIAILCAYGPIITVYL) threads the bilayer. Topologically, residues 261-266 (QPTPNP) are extracellular. Residues 267-287 (MLGTVVQILMNLVGPMLNPLI) traverse the membrane as a helical segment. Residues 288–312 (YTLRNKEVKTALKTILHRTGHVPES) are Cytoplasmic-facing.

Belongs to the G-protein coupled receptor 1 family.

It is found in the cell membrane. In terms of biological role, odorant receptor. In Homo sapiens (Human), this protein is Olfactory receptor 10D3.